The primary structure comprises 303 residues: Protoporphyrin uptake protein 1 (303 aa).

The Extracellular segment spans residues 1–18; sequence MSTTDSGFVLYHYTPSKA. A helical membrane pass occupies residues 19–39; the sequence is AAIVFVVLFIIMTVIFAVQTL. The Cytoplasmic portion of the chain corresponds to 40–76; the sequence is YAARKSSKALKNNPFESSDDKVDSLEDAEYKQLKITP. Residues 77 to 97 traverse the membrane as a helical segment; that stretch reads TVFAFIPFFTGCIMEAVGYIG. Residues 98–111 are Extracellular-facing; it reads RALSSSNPERTTPY. Residues 112 to 132 form a helical membrane-spanning segment; it reads IIQSVLLLVAPALIAATIYMI. At 133–154 the chain is on the cytoplasmic side; sequence FGRLLHVMRCQSLILISARFGT. A helical membrane pass occupies residues 155–175; sequence TFFVVGDVFSFFLQAAGGGLM. The Extracellular segment spans residues 176 to 183; it reads SKAGSTKT. A helical transmembrane segment spans residues 184 to 204; sequence GSGLITAGLFVQVIFFGFFII. Residues 205–226 lie on the Cytoplasmic side of the membrane; that stretch reads NEIRFTVNVKRRCLFYEDISRK. A helical membrane pass occupies residues 227–247; sequence WIFVNATLLLSSMLILLRSIV. Residues 248 to 264 lie on the Extracellular side of the membrane; the sequence is RIVEFIQGFNGYIISHE. A helical membrane pass occupies residues 265–285; the sequence is YFIYVFDAVPMLLVIIAFSVG. Over 286–303 the chain is Cytoplasmic; sequence SFFGNVFDVIKECQTLSN.

Belongs to the lipid-translocating exporter (LTE) (TC 9.A.26.1) family. In terms of processing, N-glycosylated.

The protein resides in the cell membrane. Its function is as follows. Involved in inducible protoporphyrin IX influx and heme efflux. In Saccharomyces cerevisiae (strain ATCC 204508 / S288c) (Baker's yeast), this protein is Protoporphyrin uptake protein 1 (PUG1).